Reading from the N-terminus, the 113-residue chain is Probable leucocin-A immunity protein (113 aa).

It belongs to the immunity protein EntA family.

Imparts immunity to leucocin-A to naturally sensitive host strains. The protein is Probable leucocin-A immunity protein of Leuconostoc gelidum.